A 209-amino-acid chain; its full sequence is Ribonuclease HII (209 aa).

One can recognise an RNase H type-2 domain in the interval 7-198; that stretch reads GPVAGVDEAG…VAKAHQEWLH (192 aa). Residues Asp-13, Glu-14, and Asp-107 each coordinate a divalent metal cation.

It belongs to the RNase HII family. Requires Mn(2+) as cofactor. Mg(2+) is required as a cofactor.

It is found in the cytoplasm. The catalysed reaction is Endonucleolytic cleavage to 5'-phosphomonoester.. Endonuclease that specifically degrades the RNA of RNA-DNA hybrids. The protein is Ribonuclease HII of Corynebacterium glutamicum (strain R).